The following is a 342-amino-acid chain: Holliday junction branch migration complex subunit RuvB (342 aa).

A large ATPase domain (RuvB-L) region spans residues 1–181 (MENRMVTPFD…FGMLCAMEFY (181 aa)). Residues L20, R21, G62, K65, T66, T67, 128-130 (EDY), R171, Y181, and R218 each bind ATP. T66 contacts Mg(2+). The tract at residues 182-252 (TDEELMEIVV…GAKAALDLLE (71 aa)) is small ATPAse domain (RuvB-S). The segment at 255–342 (KEGLDKIDNK…KDNQVSIFNK (88 aa)) is head domain (RuvB-H). Positions 310 and 315 each coordinate DNA.

This sequence belongs to the RuvB family. As to quaternary structure, homohexamer. Forms an RuvA(8)-RuvB(12)-Holliday junction (HJ) complex. HJ DNA is sandwiched between 2 RuvA tetramers; dsDNA enters through RuvA and exits via RuvB. An RuvB hexamer assembles on each DNA strand where it exits the tetramer. Each RuvB hexamer is contacted by two RuvA subunits (via domain III) on 2 adjacent RuvB subunits; this complex drives branch migration. In the full resolvosome a probable DNA-RuvA(4)-RuvB(12)-RuvC(2) complex forms which resolves the HJ.

It is found in the cytoplasm. The enzyme catalyses ATP + H2O = ADP + phosphate + H(+). Its function is as follows. The RuvA-RuvB-RuvC complex processes Holliday junction (HJ) DNA during genetic recombination and DNA repair, while the RuvA-RuvB complex plays an important role in the rescue of blocked DNA replication forks via replication fork reversal (RFR). RuvA specifically binds to HJ cruciform DNA, conferring on it an open structure. The RuvB hexamer acts as an ATP-dependent pump, pulling dsDNA into and through the RuvAB complex. RuvB forms 2 homohexamers on either side of HJ DNA bound by 1 or 2 RuvA tetramers; 4 subunits per hexamer contact DNA at a time. Coordinated motions by a converter formed by DNA-disengaged RuvB subunits stimulates ATP hydrolysis and nucleotide exchange. Immobilization of the converter enables RuvB to convert the ATP-contained energy into a lever motion, pulling 2 nucleotides of DNA out of the RuvA tetramer per ATP hydrolyzed, thus driving DNA branch migration. The RuvB motors rotate together with the DNA substrate, which together with the progressing nucleotide cycle form the mechanistic basis for DNA recombination by continuous HJ branch migration. Branch migration allows RuvC to scan DNA until it finds its consensus sequence, where it cleaves and resolves cruciform DNA. The chain is Holliday junction branch migration complex subunit RuvB from Clostridium botulinum (strain Loch Maree / Type A3).